The sequence spans 175 residues: Adenine phosphoribosyltransferase (175 aa).

This sequence belongs to the purine/pyrimidine phosphoribosyltransferase family. Homodimer.

It is found in the cytoplasm. It catalyses the reaction AMP + diphosphate = 5-phospho-alpha-D-ribose 1-diphosphate + adenine. It participates in purine metabolism; AMP biosynthesis via salvage pathway; AMP from adenine: step 1/1. In terms of biological role, catalyzes a salvage reaction resulting in the formation of AMP, that is energically less costly than de novo synthesis. The sequence is that of Adenine phosphoribosyltransferase from Lactobacillus johnsonii (strain CNCM I-12250 / La1 / NCC 533).